We begin with the raw amino-acid sequence, 177 residues long: Large ribosomal subunit protein uL30 (177 aa).

This sequence belongs to the universal ribosomal protein uL30 family. In terms of assembly, part of the 50S ribosomal subunit.

The chain is Large ribosomal subunit protein uL30 from Pyrobaculum islandicum (strain DSM 4184 / JCM 9189 / GEO3).